We begin with the raw amino-acid sequence, 362 residues long: Anthranilate phosphoribosyltransferase (362 aa).

5-phospho-alpha-D-ribose 1-diphosphate-binding positions include glycine 96, 99 to 100, threonine 104, 106 to 109, 124 to 132, and glycine 136; these read GD, NIST, and KHGNRAASS. Residue glycine 96 participates in anthranilate binding. Serine 108 is a Mg(2+) binding site. Position 127 (asparagine 127) interacts with anthranilate. Arginine 182 provides a ligand contact to anthranilate. Mg(2+) contacts are provided by aspartate 240 and glutamate 241.

This sequence belongs to the anthranilate phosphoribosyltransferase family. In terms of assembly, homodimer. The cofactor is Mg(2+).

The enzyme catalyses N-(5-phospho-beta-D-ribosyl)anthranilate + diphosphate = 5-phospho-alpha-D-ribose 1-diphosphate + anthranilate. It participates in amino-acid biosynthesis; L-tryptophan biosynthesis; L-tryptophan from chorismate: step 2/5. Catalyzes the transfer of the phosphoribosyl group of 5-phosphorylribose-1-pyrophosphate (PRPP) to anthranilate to yield N-(5'-phosphoribosyl)-anthranilate (PRA). The polypeptide is Anthranilate phosphoribosyltransferase (Rhodococcus opacus (strain B4)).